The chain runs to 513 residues: MSASVVLQPGQVTLAQWRALYRGAEVTLDPACAQAVLRSAQTVEAIVARGEPVYGVNTGFGKLASVRIERDDLQTLQRNIVLSHAAGVGDPTPVPVVRLMMALKLTSLAQGASGIQPDTLALLEAMLRQGITPVVPCQGSVGASGDLAPLSHLAAVMIGVGEAFVGDQRLPAADALARAQLQPRVLGAKEGLALLNGTQFSTACALAGLFEIETVLQAALVTGALSVEAAKGSDTPFDARIHALRGQPGQIATAAALRALMAESAIRESHRLGDVRVQDPYCLRCQPQVMGAALDVMRQAARTLEIEANGVSDNPLVFSDTGEALSGGNFHAEPVAFAADMLALAVCEIGSISERRTAMLVDPALSGLPAFLTPRPGLNSGFMIPQVTAAALVSENKQCAYPASVDSIPTSANQEDHVSMAAHGARRLLAMADNAAHVIGIELLAAVQGCDFHAPLRSSAALEAARALLRAQVPTLQDDRYFHPDMLAASALVRSGALATAVGIVLPGVELSA.

Residues 143–145 (ASG) constitute a cross-link (5-imidazolinone (Ala-Gly)). 2,3-didehydroalanine (Ser) is present on Ser-144.

The protein belongs to the PAL/histidase family. In terms of processing, contains an active site 4-methylidene-imidazol-5-one (MIO), which is formed autocatalytically by cyclization and dehydration of residues Ala-Ser-Gly.

Its subcellular location is the cytoplasm. The enzyme catalyses L-histidine = trans-urocanate + NH4(+). It functions in the pathway amino-acid degradation; L-histidine degradation into L-glutamate; N-formimidoyl-L-glutamate from L-histidine: step 1/3. The polypeptide is Histidine ammonia-lyase (Xanthomonas campestris pv. campestris (strain B100)).